A 174-amino-acid chain; its full sequence is NADH-quinone oxidoreductase subunit B (174 aa).

4 residues coordinate [4Fe-4S] cluster: Cys53, Cys54, Cys118, and Cys148.

It belongs to the complex I 20 kDa subunit family. As to quaternary structure, NDH-1 is composed of 14 different subunits. Subunits NuoB, C, D, E, F, and G constitute the peripheral sector of the complex. Requires [4Fe-4S] cluster as cofactor.

The protein localises to the cell inner membrane. The enzyme catalyses a quinone + NADH + 5 H(+)(in) = a quinol + NAD(+) + 4 H(+)(out). In terms of biological role, NDH-1 shuttles electrons from NADH, via FMN and iron-sulfur (Fe-S) centers, to quinones in the respiratory chain. Couples the redox reaction to proton translocation (for every two electrons transferred, four hydrogen ions are translocated across the cytoplasmic membrane), and thus conserves the redox energy in a proton gradient. The sequence is that of NADH-quinone oxidoreductase subunit B from Ruegeria sp. (strain TM1040) (Silicibacter sp.).